The sequence spans 294 residues: Extracellular metalloprotease TRV_07111 (294 aa).

The first 19 residues, 1–19, serve as a signal peptide directing secretion; sequence MRFSVVFAAIAALSSVVTA. Asparagine 49, asparagine 54, and asparagine 74 each carry an N-linked (GlcNAc...) asparagine glycan. Histidine 185 is a Zn(2+) binding site. Glutamate 186 is a catalytic residue. Zn(2+) is bound at residue histidine 189. A disulfide bridge connects residues cysteine 224 and cysteine 250.

It belongs to the peptidase M43B family.

Its subcellular location is the secreted. Secreted metalloproteinase that allows assimilation of proteinaceous substrates. Plays a pivotal role as a pathogenicity determinant during infections and contributes to the ability of the pathogen to persist within the mammalian host. In Trichophyton verrucosum (strain HKI 0517), this protein is Extracellular metalloprotease TRV_07111.